The sequence spans 93 residues: Exodeoxyribonuclease 7 small subunit (93 aa).

Residues 61–75 (IDDNGDEKVYEKQTD) are compositionally biased toward basic and acidic residues. A disordered region spans residues 61 to 93 (IDDNGDEKVYEKQTDDPSNNGGGNRGFGSADEQ).

The protein belongs to the XseB family. Heterooligomer composed of large and small subunits.

It localises to the cytoplasm. It carries out the reaction Exonucleolytic cleavage in either 5'- to 3'- or 3'- to 5'-direction to yield nucleoside 5'-phosphates.. In terms of biological role, bidirectionally degrades single-stranded DNA into large acid-insoluble oligonucleotides, which are then degraded further into small acid-soluble oligonucleotides. This Limosilactobacillus reuteri (strain DSM 20016) (Lactobacillus reuteri) protein is Exodeoxyribonuclease 7 small subunit.